Reading from the N-terminus, the 355-residue chain is Probable tRNA-dihydrouridine synthase 1 (355 aa).

FMN-binding positions include 48 to 50 (PLS) and Gln102. Catalysis depends on Cys132, which acts as the Proton donor. FMN-binding positions include Lys171, 232-234 (NGD), and 256-257 (SR).

This sequence belongs to the Dus family. The cofactor is FMN.

It carries out the reaction a 5,6-dihydrouridine in tRNA + NAD(+) = a uridine in tRNA + NADH + H(+). It catalyses the reaction a 5,6-dihydrouridine in tRNA + NADP(+) = a uridine in tRNA + NADPH + H(+). Its function is as follows. Catalyzes the synthesis of 5,6-dihydrouridine (D), a modified base found in the D-loop of most tRNAs, via the reduction of the C5-C6 double bond in target uridines. The chain is Probable tRNA-dihydrouridine synthase 1 (dus1) from Synechocystis sp. (strain ATCC 27184 / PCC 6803 / Kazusa).